The primary structure comprises 348 residues: Histidinol-phosphate aminotransferase (348 aa).

Lys-211 is subject to N6-(pyridoxal phosphate)lysine.

This sequence belongs to the class-II pyridoxal-phosphate-dependent aminotransferase family. Histidinol-phosphate aminotransferase subfamily. In terms of assembly, homodimer. Requires pyridoxal 5'-phosphate as cofactor.

It carries out the reaction L-histidinol phosphate + 2-oxoglutarate = 3-(imidazol-4-yl)-2-oxopropyl phosphate + L-glutamate. It functions in the pathway amino-acid biosynthesis; L-histidine biosynthesis; L-histidine from 5-phospho-alpha-D-ribose 1-diphosphate: step 7/9. In Pseudomonas entomophila (strain L48), this protein is Histidinol-phosphate aminotransferase.